The following is a 284-amino-acid chain: Insulin-like growth factor-binding protein 2 (284 aa).

Positions 1-21 (MGLSRYLLGLLLGVLCTPAPA) are cleaved as a signal peptide. Residues 23 to 106 (VLFRCPPCSP…VLGLGTCGKR (84 aa)) enclose the IGFBP N-terminal domain. 6 cysteine pairs are disulfide-bonded: Cys27/Cys56, Cys30/Cys58, Cys38/Cys59, Cys47/Cys62, Cys70/Cys83, and Cys77/Cys103. The interval 108–184 (DTEYGSSQER…KSEDKKRPAR (77 aa)) is disordered. Residues 117-127 (RGTELPEERSD) are compositionally biased toward basic and acidic residues. Residues 136-145 (EAGPAVAGEA) are compositionally biased toward low complexity. A compositionally biased stretch (basic and acidic residues) spans 152 to 180 (KKEMKEIAVTRERANEQQRSKSNKSEDKK). The Thyroglobulin type-1 domain maps to 184-266 (RSLCQLQLDQ…SPTIRGDPEC (83 aa)). 3 cysteine pairs are disulfide-bonded: Cys187–Cys221, Cys232–Cys243, and Cys245–Cys266. The Cell attachment site signature appears at 261-263 (RGD).

Interacts with igf1 and igf2.

It is found in the secreted. Functionally, IGF-binding proteins prolong the half-life of the IGFs and have been shown to either inhibit or stimulate the growth promoting effects of the IGFs on cell culture. They alter the interaction of IGFs with their cell surface receptors. This Xenopus tropicalis (Western clawed frog) protein is Insulin-like growth factor-binding protein 2.